The chain runs to 336 residues: Isethionate-binding periplasmic protein DctP (336 aa).

Residues 1–23 form the signal peptide; the sequence is MKHLLKAGALVALACIVTLTAGA.

This sequence belongs to the bacterial solute-binding protein 7 family. In terms of assembly, the complex comprises the periplasmic solute receptor protein DctP, and the fused transmembrane protein DctMQ.

Its subcellular location is the periplasm. The catalysed reaction is 2-hydroxyethane-1-sulfonate(out) + Na(+)(out) = 2-hydroxyethane-1-sulfonate(in) + Na(+)(in). It functions in the pathway organosulfur degradation; alkanesulfonate degradation. Its function is as follows. Part of the tripartite ATP-independent periplasmic (TRAP) transport system DctPQM involved in the uptake of isethionate (2-hydroxyethanesulfonate), which is then catabolized by enzymes encoded by adjacent genes in the locus. The DctP subunit is the solute-binding protein. Thereby is involved in an anaerobic respiration pathway that converts the sulfonate isethionate to ammonia, acetate and sulfide. The chain is Isethionate-binding periplasmic protein DctP from Oleidesulfovibrio alaskensis (strain ATCC BAA-1058 / DSM 17464 / G20) (Desulfovibrio alaskensis).